We begin with the raw amino-acid sequence, 572 residues long: Fatty acid amide hydrolase 1 (572 aa).

Positions 1 to 14 (MIFYLVLLVLGAIA) are cleaved as a signal peptide. Residues 32–63 (IVAQRRRDDLSKNVEQARKAADKLDTQRRDWI) adopt a coiled-coil conformation. Residues K139 and S214 each act as charge relay system in the active site. Substrate is bound by residues S214 and 235 to 238 (VGGS). The active-site Acyl-ester intermediate is S238.

It belongs to the amidase family. Expressed in the pharynx, some pharyngeal neurons, the posterior intestine and anal depressor muscles.

The catalysed reaction is N-(5Z,8Z,11Z,14Z-eicosatetraenoyl)-ethanolamine + H2O = ethanolamine + (5Z,8Z,11Z,14Z)-eicosatetraenoate. It catalyses the reaction (9Z)-octadecenamide + H2O = (9Z)-octadecenoate + NH4(+). The enzyme catalyses (5Z,8Z,11Z,14Z,17Z-eicosapentaenoyl) ethanolamine + H2O = (5Z,8Z,11Z,14Z,17Z)-eicosapentaenoate + ethanolamine. It carries out the reaction N-(9Z-hexadecenoyl) ethanolamine + H2O = (9Z)-hexadecenoate + ethanolamine. The catalysed reaction is N-(9Z-octadecenoyl) ethanolamine + H2O = ethanolamine + (9Z)-octadecenoate. It catalyses the reaction N-octadecanoyl ethanolamine + H2O = octadecanoate + ethanolamine. The enzyme catalyses N-docosanoyl-ethanolamine + H2O = docosanoate + ethanolamine. It carries out the reaction N-(15Z-tetracosenoyl)-ethanolamine + H2O = (15Z)-tetracosenoate + ethanolamine. The catalysed reaction is N-hexadecanoylethanolamine + H2O = ethanolamine + hexadecanoate. It catalyses the reaction N-(9Z,12Z-octadecadienoyl)-ethanolamine + H2O = ethanolamine + (9Z,12Z)-octadecadienoate. The enzyme catalyses (9Z)-octadecenoate + glycine = N-(9Z-octadecenoyl)glycine + H2O. It carries out the reaction N-(5Z,8Z,11Z,14Z)-eicosatetraenoyl-glycine + H2O = (5Z,8Z,11Z,14Z)-eicosatetraenoate + glycine. The catalysed reaction is N-(5Z,8Z,11Z,14Z-eicosatetraenoyl)-L-serine + H2O = (5Z,8Z,11Z,14Z)-eicosatetraenoate + L-serine. Catalyzes the hydrolysis of endogenous amidated lipids like anandamide (AEA or N-(5Z,8Z,11Z,14Z-eicosatetraenoyl)-ethanolamine) and eicosapentaneoyl ethanolamide (EPEA or (5Z,8Z,11Z,14Z,17Z-eicosapentaenoyl) ethanolamine), as well as other fatty amides, to their corresponding fatty acids, thereby regulating the signaling functions of these molecules. EPEA promotes dauer formation and may constitute a signal of high nutrient availability. Breakdown of EPEA may promote lifespan extension when nutrient availability is high. Facilitates axon regeneration after injury by degradating inhibitory compounds such as AEA. FAAH cooperates with PM20D1 in the hydrolysis of amino acid-conjugated fatty acids such as N-fatty acyl glycine and N-fatty acyl-L-serine, thereby acting as a physiological regulator of specific subsets of intracellular, but not of extracellular, N-fatty acyl amino acids. The sequence is that of Fatty acid amide hydrolase 1 from Caenorhabditis elegans.